The following is a 264-amino-acid chain: Thymidylate synthase (264 aa).

A dUMP-binding site is contributed by arginine 21. Histidine 51 serves as a coordination point for (6R)-5,10-methylene-5,6,7,8-tetrahydrofolate. 126–127 (RR) contacts dUMP. Cysteine 146 acts as the Nucleophile in catalysis. Residues 166–169 (RSCD), asparagine 177, and 207–209 (HLY) each bind dUMP. Residue aspartate 169 coordinates (6R)-5,10-methylene-5,6,7,8-tetrahydrofolate. Residue alanine 263 coordinates (6R)-5,10-methylene-5,6,7,8-tetrahydrofolate.

It belongs to the thymidylate synthase family. Bacterial-type ThyA subfamily. As to quaternary structure, homodimer.

It is found in the cytoplasm. The enzyme catalyses dUMP + (6R)-5,10-methylene-5,6,7,8-tetrahydrofolate = 7,8-dihydrofolate + dTMP. It functions in the pathway pyrimidine metabolism; dTTP biosynthesis. Its function is as follows. Catalyzes the reductive methylation of 2'-deoxyuridine-5'-monophosphate (dUMP) to 2'-deoxythymidine-5'-monophosphate (dTMP) while utilizing 5,10-methylenetetrahydrofolate (mTHF) as the methyl donor and reductant in the reaction, yielding dihydrofolate (DHF) as a by-product. This enzymatic reaction provides an intracellular de novo source of dTMP, an essential precursor for DNA biosynthesis. This is Thymidylate synthase from Pectobacterium atrosepticum (strain SCRI 1043 / ATCC BAA-672) (Erwinia carotovora subsp. atroseptica).